The sequence spans 382 residues: Homoserine O-acetyltransferase (382 aa).

The disordered stretch occupies residues 1-20 (MSTDQSPCPSATGAELLPPP). The AB hydrolase-1 domain occupies 59 to 363 (NVVLVEHALT…RDGHDGFLTE (305 aa)). Residue Ser164 is the Nucleophile of the active site. Residue Arg234 coordinates substrate. Active-site residues include Asp327 and His357. Asp358 contributes to the substrate binding site.

The protein belongs to the AB hydrolase superfamily. MetX family. In terms of assembly, homodimer.

The protein localises to the cytoplasm. It catalyses the reaction L-homoserine + acetyl-CoA = O-acetyl-L-homoserine + CoA. The protein operates within amino-acid biosynthesis; L-methionine biosynthesis via de novo pathway; O-acetyl-L-homoserine from L-homoserine: step 1/1. Transfers an acetyl group from acetyl-CoA to L-homoserine, forming acetyl-L-homoserine. This is Homoserine O-acetyltransferase from Nocardia farcinica (strain IFM 10152).